Reading from the N-terminus, the 891-residue chain is Longitudinals lacking protein, isoform G (891 aa).

A BTB domain is found at 32–97 (VDCTLAAEGK…MYRGEVNISQ (66 aa)). Disordered regions lie at residues 115-200 (LSDN…SSVL) and 228-340 (SSGP…ASAS). Ser140 bears the Phosphoserine mark. Residue Thr161 is modified to Phosphothreonine. Phosphoserine is present on residues Ser162 and Ser168. Composition is skewed to low complexity over residues 162–175 (SGDV…SSSP), 228–251 (SSGP…LTST), 263–293 (TSST…QTTS), and 329–340 (NSATGPNPASAS). Phosphoserine is present on residues Ser372, Ser375, and Ser378. Residues 446 to 467 (QDAQQRDPQDLSRKENTAPDVA) are disordered. A compositionally biased stretch (basic and acidic residues) spans 449–462 (QQRDPQDLSRKENT). Phosphoserine is present on residues Ser696 and Ser705. At Thr706 the chain carries Phosphothreonine. Ser749 and Ser750 each carry phosphoserine. A C2H2-type 1; degenerate zinc finger spans residues 791–813 (YECRHCGKKYRWKSTLRRHENVE). The C2H2-type 2 zinc finger occupies 821–843 (HQCPYCPYKSKQRGNLGVHVRKH). A disordered region spans residues 840–891 (VRKHHTDLPQLPSKRRSKYSMNRENGMSGSMSDDSQGKLIIDFNGKGELETK). A Phosphoserine modification is found at Ser874.

In terms of tissue distribution, expressed in both mesoderm and ectoderm with expression highest in the mesectoderm by stage 11. Becomes enriched in a cluster of brain cells, in abdominal histoblasts, and in the embryonic imaginal disks during later stages.

It is found in the nucleus. Putative transcription factor required for axon growth and guidance in the central and peripheral nervous systems. Repels CNS axons away from the midline by promoting the expression of the midline repellent sli and its receptor robo. In Drosophila melanogaster (Fruit fly), this protein is Longitudinals lacking protein, isoform G.